We begin with the raw amino-acid sequence, 487 residues long: Fibroblast growth factor receptor-like 1 (487 aa).

Residues 1 to 18 form the signal peptide; that stretch reads MGLQLALLLAGIVALSDS. Residues 19 to 371 lie on the Extracellular side of the membrane; the sequence is ARGPPRIADK…PSSVSSLPWP (353 aa). The 87-residue stretch at 23–109 folds into the Ig-like C2-type 1 domain; that stretch reads PRIADKVIHR…GSTNVNYTLI (87 aa). An intrachain disulfide couples cysteine 45 to cysteine 93. Residue asparagine 105 is glycosylated (N-linked (GlcNAc...) asparagine). Polar residues predominate over residues 115–125; it reads SSGKNSQTPEG. Positions 115–147 are disordered; it reads SSGKNSQTPEGSNGEYEDHSGKQWAQPRFTQPA. Ig-like C2-type domains lie at 141-231 and 240-348; these read PRFT…YKVE and PILT…AFLT. A disulfide bond links cysteine 166 and cysteine 215. N-linked (GlcNAc...) asparagine glycans are attached at residues asparagine 225, asparagine 249, and asparagine 287. Cysteine 262 and cysteine 332 are joined by a disulfide. A helical transmembrane segment spans residues 372 to 392; the sequence is VIIGIPAGAVFIFGTILLWLC. Topologically, residues 393–487 are cytoplasmic; it reads QTKKKPCSPP…HQHQHIQYQC (95 aa).

Interacts with heparin and FGF2. Expressed in cartilaginous structures.

The protein resides in the cell membrane. In terms of biological role, has a negative effect on cell proliferation. This chain is Fibroblast growth factor receptor-like 1 (FGFRL1), found in Gallus gallus (Chicken).